The chain runs to 200 residues: NAD(P)H dehydrogenase (quinone) (200 aa).

A Flavodoxin-like domain is found at 4-191; the sequence is VLVLYYSSYG…DIARYQGKHV (188 aa). FMN contacts are provided by residues 10–15 and 79–81; these read SSYGHV and TRF. Tyr12 is an NAD(+) binding site. Position 99 (Trp99) interacts with substrate. Residues 114–120 and His135 each bind FMN; that span reads STGTQHG.

Belongs to the WrbA family. Requires FMN as cofactor.

The catalysed reaction is a quinone + NADH + H(+) = a quinol + NAD(+). It catalyses the reaction a quinone + NADPH + H(+) = a quinol + NADP(+). In Burkholderia ambifaria (strain MC40-6), this protein is NAD(P)H dehydrogenase (quinone).